A 500-amino-acid polypeptide reads, in one-letter code: MGQSLHALLRDVGLELPAGLADPQLTSITSDSRLVGEGSLFLGLPGERFDGGRFWRQALEAGAAAAVIGPSAAQELPPAADQPVLVLREPVARSIGELAASYWGHPCRRMALIGVTGTNGKTTTTHLIEHLAVRVGQPTALFGTLVNRWPGYSITATHTTSVADRLQAQLAEAASAGSQLAAMEVSSHALVQERVAGCRFAGAVFTNLTQDHLDYHGTMESYYEAKARLFTAPLLDGDGPSAVVNGDDPWGSRLAEQLGGRCWRSSLGDPQAELQMVDLEMTGQGVRGRLLSPAGSGAFCSPLLGRFNLMNLLQAVGVLLQRGLPLAPLLEAVGSFRGVPGRMERVVVNGAESAALPTVLVDYAHTPDGLENALAASRPFTDGRLVCVFGCGGDRDRGKRPQMAAIAARLADRVVVTSDNPRTEDPDQIIADVVAGMPSGTDLSVERDRATAIAEAIADASAADLVLIAGKGHEDYQILGTEKVHFDDREEAEQALRQRQ.

UDP-N-acetyl-alpha-D-muramoyl-L-alanyl-D-glutamate is bound at residue serine 32. 117–123 (GTNGKTT) is an ATP binding site. UDP-N-acetyl-alpha-D-muramoyl-L-alanyl-D-glutamate is bound by residues 159–160 (TT), serine 186, glutamine 192, and arginine 194. The residue at position 226 (lysine 226) is an N6-carboxylysine. Residues arginine 395, 419 to 422 (DNPR), glycine 470, and glutamate 474 contribute to the meso-2,6-diaminopimelate site. Residues 419–422 (DNPR) carry the Meso-diaminopimelate recognition motif motif.

Belongs to the MurCDEF family. MurE subfamily. It depends on Mg(2+) as a cofactor. In terms of processing, carboxylation is probably crucial for Mg(2+) binding and, consequently, for the gamma-phosphate positioning of ATP.

It localises to the cytoplasm. It catalyses the reaction UDP-N-acetyl-alpha-D-muramoyl-L-alanyl-D-glutamate + meso-2,6-diaminopimelate + ATP = UDP-N-acetyl-alpha-D-muramoyl-L-alanyl-gamma-D-glutamyl-meso-2,6-diaminopimelate + ADP + phosphate + H(+). Its pathway is cell wall biogenesis; peptidoglycan biosynthesis. Its function is as follows. Catalyzes the addition of meso-diaminopimelic acid to the nucleotide precursor UDP-N-acetylmuramoyl-L-alanyl-D-glutamate (UMAG) in the biosynthesis of bacterial cell-wall peptidoglycan. The sequence is that of UDP-N-acetylmuramoyl-L-alanyl-D-glutamate--2,6-diaminopimelate ligase from Parasynechococcus marenigrum (strain WH8102).